A 185-amino-acid polypeptide reads, in one-letter code: Homeobox expressed in ES cells 1 (185 aa).

The segment at residues 108–167 (GRRPRTAFTQNQIEVLENVFRVNCYPGIDIREDLAQKLNLEEDRIQIWFQNRRAKLKRSH) is a DNA-binding region (homeobox).

The protein belongs to the ANF homeobox family. As to quaternary structure, can form heterodimers with PROP1 in binding to DNA. Interacts with TLE1.

It localises to the nucleus. Required for the normal development of the forebrain, eyes and other anterior structures such as the olfactory placodes and pituitary gland. Possible transcriptional repressor. Binds to the palindromic PIII sequence, 5'-AGCTTGAGTCTAATTGAATTAACTGTAC-3'. HESX1 and PROP1 bind as heterodimers on this palindromic site, and, in vitro, HESX1 can antagonize PROP1 activation. The sequence is that of Homeobox expressed in ES cells 1 (HESX1) from Pan paniscus (Pygmy chimpanzee).